A 319-amino-acid chain; its full sequence is Nucleotide-binding protein Rru_A3448 (319 aa).

The segment at 1–34 (MGRSASLLRLRDPAPLPTDIAPDPAEAPPSPAAD) is disordered. Position 42 to 49 (42 to 49 (GMSGAGRT)) interacts with ATP. 90 to 93 (DTRT) serves as a coordination point for GTP.

Belongs to the RapZ-like family.

Displays ATPase and GTPase activities. This chain is Nucleotide-binding protein Rru_A3448, found in Rhodospirillum rubrum (strain ATCC 11170 / ATH 1.1.1 / DSM 467 / LMG 4362 / NCIMB 8255 / S1).